A 141-amino-acid chain; its full sequence is Nucleoside diphosphate kinase (141 aa).

ATP is bound by residues Lys11, Phe59, Arg87, Thr93, Arg104, and Asn114. The active-site Pros-phosphohistidine intermediate is His117.

This sequence belongs to the NDK family. In terms of assembly, homotetramer. Requires Mg(2+) as cofactor.

Its subcellular location is the cytoplasm. The enzyme catalyses a 2'-deoxyribonucleoside 5'-diphosphate + ATP = a 2'-deoxyribonucleoside 5'-triphosphate + ADP. The catalysed reaction is a ribonucleoside 5'-diphosphate + ATP = a ribonucleoside 5'-triphosphate + ADP. In terms of biological role, major role in the synthesis of nucleoside triphosphates other than ATP. The ATP gamma phosphate is transferred to the NDP beta phosphate via a ping-pong mechanism, using a phosphorylated active-site intermediate. This Actinobacillus succinogenes (strain ATCC 55618 / DSM 22257 / CCUG 43843 / 130Z) protein is Nucleoside diphosphate kinase.